Consider the following 136-residue polypeptide: MYLERWWWSCIISQSCSLDFAASLDDLSFWASLSWISKSVRVGLIFSNPSGAGLDLLVFMRGMSFCEVSFASLDGCRGVYIDDESLRKFFFFFQYFTFRCERQMYYAFKSQRSIIVKVPTTTRVIDLVLVVNVLSL.

This is an uncharacterized protein from Saccharomyces cerevisiae (strain ATCC 204508 / S288c) (Baker's yeast).